We begin with the raw amino-acid sequence, 491 residues long: Katanin p60 ATPase-containing subunit A1 (491 aa).

The segment at 1–29 (MSLLMISENVKLAREYALLGNYDSAMVYY) is interaction with KATNB1. The tract at residues 1-75 (MSLLMISENV…VKDIMKTLES (75 aa)) is interaction with dynein and NDEL1. The interaction with microtubules stretch occupies residues 1 to 185 (MSLLMISENV…EPETNKFDST (185 aa)). Phosphoserine; by DYRK2 is present on residues Ser42 and Ser109. Positions 87-185 (QHDLPASEGE…EPETNKFDST (99 aa)) are disordered. Thr133 is modified (phosphothreonine; by DYRK2). The segment covering 145 to 169 (HNDRGKAVRCREKKEQNKGREEKNK) has biased composition (basic and acidic residues). A Phosphoserine modification is found at Ser170. 249–256 (GPPGTGKT) is a binding site for ATP.

Belongs to the AAA ATPase family. Katanin p60 subunit A1 subfamily. In terms of assembly, can homooligomerize into hexameric rings, which may be promoted by interaction with microtubules. Interacts with KATNB1, which may serve as a targeting subunit. Interacts with ASPM; the katanin complex formation KATNA1:KATNB1 is required for the association of ASPM Interacts with dynein and NDEL1. Associates with the E3 ligase complex containing DYRK2, EDD/UBR5, DDB1 and DCAF1 proteins (EDVP complex). Interacts with KLHL42 (via the kelch domains). Interacts with CUL3; the interaction is enhanced by KLHL42. Interacts with KATNB1 and KATNBL1. Interacts with CAMSAP2 and CAMSAP3; leading to regulate the length of CAMSAP-decorated microtubule stretches. Post-translationally, phosphorylation by DYRK2 triggers ubiquitination and subsequent degradation. Ubiquitinated by the BCR(KLHL42) E3 ubiquitin ligase complex, leading to its proteasomal degradation. Ubiquitinated by the EDVP E3 ligase complex and subsequently targeted for proteasomal degradation.

The protein resides in the cytoplasm. Its subcellular location is the midbody. It localises to the cytoskeleton. It is found in the microtubule organizing center. The protein localises to the centrosome. The protein resides in the spindle pole. Its subcellular location is the spindle. The enzyme catalyses n ATP + n H2O + a microtubule = n ADP + n phosphate + (n+1) alpha/beta tubulin heterodimers.. Its activity is regulated as follows. ATPase activity is stimulated by microtubules, which promote homooligomerization. ATP-dependent microtubule severing is stimulated by interaction with KATNB1. Its function is as follows. Catalytic subunit of a complex which severs microtubules in an ATP-dependent manner. Microtubule severing may promote rapid reorganization of cellular microtubule arrays and the release of microtubules from the centrosome following nucleation. Microtubule release from the mitotic spindle poles may allow depolymerization of the microtubule end proximal to the spindle pole, leading to poleward microtubule flux and poleward motion of chromosome. Microtubule release within the cell body of neurons may be required for their transport into neuronal processes by microtubule-dependent motor proteins. This transport is required for axonal growth. The protein is Katanin p60 ATPase-containing subunit A1 of Macaca fascicularis (Crab-eating macaque).